The following is a 219-amino-acid chain: Endonuclease III (219 aa).

In terms of domain architecture, HhH spans 109-128; sequence RDELVKLPGVGRKTANVVVS. [4Fe-4S] cluster is bound by residues Cys189, Cys196, Cys199, and Cys205.

It belongs to the Nth/MutY family. [4Fe-4S] cluster serves as cofactor.

It catalyses the reaction 2'-deoxyribonucleotide-(2'-deoxyribose 5'-phosphate)-2'-deoxyribonucleotide-DNA = a 3'-end 2'-deoxyribonucleotide-(2,3-dehydro-2,3-deoxyribose 5'-phosphate)-DNA + a 5'-end 5'-phospho-2'-deoxyribonucleoside-DNA + H(+). Functionally, DNA repair enzyme that has both DNA N-glycosylase activity and AP-lyase activity. The DNA N-glycosylase activity releases various damaged pyrimidines from DNA by cleaving the N-glycosidic bond, leaving an AP (apurinic/apyrimidinic) site. The AP-lyase activity cleaves the phosphodiester bond 3' to the AP site by a beta-elimination, leaving a 3'-terminal unsaturated sugar and a product with a terminal 5'-phosphate. In Bacillus subtilis (strain 168), this protein is Endonuclease III.